Consider the following 182-residue polypeptide: Probable RNA 2'-phosphotransferase (182 aa).

It belongs to the KptA/TPT1 family.

Its function is as follows. Removes the 2'-phosphate from RNA via an intermediate in which the phosphate is ADP-ribosylated by NAD followed by a presumed transesterification to release the RNA and generate ADP-ribose 1''-2''-cyclic phosphate (APPR&gt;P). May function as an ADP-ribosylase. The polypeptide is Probable RNA 2'-phosphotransferase (Pseudomonas aeruginosa (strain UCBPP-PA14)).